Consider the following 482-residue polypeptide: F-box/LRR-repeat protein At3g58930 (482 aa).

Positions 1-47 (MDRVSNLPDGVRGHILSFLPAKHIALTSVLSKSWLNLWKLIPILDID) constitute an F-box domain. LRR repeat units follow at residues 122–150 (SYED…KIRN), 175–200 (SDLI…RMAS), 222–248 (GTGC…NYSD), 313–344 (ILYL…GIKS), and 345–370 (EEGR…IIEG).

This Arabidopsis thaliana (Mouse-ear cress) protein is F-box/LRR-repeat protein At3g58930.